A 219-amino-acid chain; its full sequence is MLRNKVRKTDTLIALNEVYESIQGEGLLVGLPSVFIRLQGCNLRCPWCDQPEALSFSGRKVKLSSLINELKKFTAKHIVITGGEPFAHRELPFIVEFLLSEGYSVQIETNGTLWVEEMEKFAEGIHITCSPKGVAKYYVHPKILKYAKELKFVVDKEFSKEVLKKEEFERFLREGKVVLQPESNRKEMMEKALKIQKELLKECYTVRVIPQVHKCFDLK.

Substrate contacts are provided by residues 22–24 (IQG) and Arg-37. The Radical SAM core domain maps to 28-219 (LVGLPSVFIR…PQVHKCFDLK (192 aa)). [4Fe-4S] cluster is bound by residues Cys-41, Cys-45, and Cys-48. A substrate-binding site is contributed by Thr-81. Residues Gly-83 and 130 to 132 (SPK) contribute to the S-adenosyl-L-methionine site.

It belongs to the radical SAM superfamily. 7-carboxy-7-deazaguanine synthase family. Homodimer. The cofactor is [4Fe-4S] cluster. S-adenosyl-L-methionine serves as cofactor. Mg(2+) is required as a cofactor.

The enzyme catalyses 6-carboxy-5,6,7,8-tetrahydropterin + H(+) = 7-carboxy-7-deazaguanine + NH4(+). Its pathway is purine metabolism; 7-cyano-7-deazaguanine biosynthesis. Catalyzes the complex heterocyclic radical-mediated conversion of 6-carboxy-5,6,7,8-tetrahydropterin (CPH4) to 7-carboxy-7-deazaguanine (CDG), a step common to the biosynthetic pathways of all 7-deazapurine-containing compounds. In Aquifex aeolicus (strain VF5), this protein is 7-carboxy-7-deazaguanine synthase.